A 123-amino-acid chain; its full sequence is Large ribosomal subunit protein bL12 (123 aa).

The protein belongs to the bacterial ribosomal protein bL12 family. In terms of assembly, homodimer. Part of the ribosomal stalk of the 50S ribosomal subunit. Forms a multimeric L10(L12)X complex, where L10 forms an elongated spine to which 2 to 4 L12 dimers bind in a sequential fashion. Binds GTP-bound translation factors.

Its function is as follows. Forms part of the ribosomal stalk which helps the ribosome interact with GTP-bound translation factors. Is thus essential for accurate translation. This Bartonella bacilliformis (strain ATCC 35685 / KC583 / Herrer 020/F12,63) protein is Large ribosomal subunit protein bL12.